The following is a 432-amino-acid chain: uncharacterized protein (432 aa).

2 consecutive SIS domains span residues 105-244 (WLTE…DLVS) and 277-422 (CDKK…VDLP).

This is an uncharacterized protein from Saccharomyces cerevisiae (strain ATCC 204508 / S288c) (Baker's yeast).